A 357-amino-acid polypeptide reads, in one-letter code: NADH-quinone oxidoreductase subunit H (357 aa).

The next 8 membrane-spanning stretches (helical) occupy residues 20–40 (WLLV…MGCV), 92–112 (ALFV…WAVI), 127–147 (LLFV…AGWA), 165–185 (ISYE…SGSL), 203–223 (GLTF…IYII), 259–279 (FFLA…LMFL), 294–314 (IPGW…FIWF), and 329–349 (LGWK…AIWM).

It belongs to the complex I subunit 1 family. NDH-1 is composed of 14 different subunits. Subunits NuoA, H, J, K, L, M, N constitute the membrane sector of the complex.

Its subcellular location is the cell inner membrane. It carries out the reaction a quinone + NADH + 5 H(+)(in) = a quinol + NAD(+) + 4 H(+)(out). NDH-1 shuttles electrons from NADH, via FMN and iron-sulfur (Fe-S) centers, to quinones in the respiratory chain. The immediate electron acceptor for the enzyme in this species is believed to be ubiquinone. Couples the redox reaction to proton translocation (for every two electrons transferred, four hydrogen ions are translocated across the cytoplasmic membrane), and thus conserves the redox energy in a proton gradient. This subunit may bind ubiquinone. The chain is NADH-quinone oxidoreductase subunit H from Herminiimonas arsenicoxydans.